Here is a 285-residue protein sequence, read N- to C-terminus: Pantothenate synthetase (285 aa).

ATP is bound at residue Met30 to His37. The Proton donor role is filled by His37. Residue Gln61 coordinates (R)-pantoate. Gln61 contributes to the beta-alanine binding site. Gly149–Asp152 serves as a coordination point for ATP. Gln155 lines the (R)-pantoate pocket. ATP contacts are provided by residues Val178 and Leu186–Arg189.

It belongs to the pantothenate synthetase family. As to quaternary structure, homodimer.

Its subcellular location is the cytoplasm. It catalyses the reaction (R)-pantoate + beta-alanine + ATP = (R)-pantothenate + AMP + diphosphate + H(+). It participates in cofactor biosynthesis; (R)-pantothenate biosynthesis; (R)-pantothenate from (R)-pantoate and beta-alanine: step 1/1. Its function is as follows. Catalyzes the condensation of pantoate with beta-alanine in an ATP-dependent reaction via a pantoyl-adenylate intermediate. The sequence is that of Pantothenate synthetase from Aeromonas hydrophila subsp. hydrophila (strain ATCC 7966 / DSM 30187 / BCRC 13018 / CCUG 14551 / JCM 1027 / KCTC 2358 / NCIMB 9240 / NCTC 8049).